The sequence spans 353 residues: Ferredoxin--NADP reductase (353 aa).

Positions 25, 44, 52, 57, 97, 132, 298, and 339 each coordinate FAD.

Belongs to the ferredoxin--NADP reductase type 2 family. Homodimer. The cofactor is FAD.

The catalysed reaction is 2 reduced [2Fe-2S]-[ferredoxin] + NADP(+) + H(+) = 2 oxidized [2Fe-2S]-[ferredoxin] + NADPH. The protein is Ferredoxin--NADP reductase of Chlorobium phaeovibrioides (strain DSM 265 / 1930) (Prosthecochloris vibrioformis (strain DSM 265)).